The following is a 139-amino-acid chain: Large ribosomal subunit protein uL16 (139 aa).

This sequence belongs to the universal ribosomal protein uL16 family. In terms of assembly, part of the 50S ribosomal subunit.

Functionally, binds 23S rRNA and is also seen to make contacts with the A and possibly P site tRNAs. This is Large ribosomal subunit protein uL16 from Microcystis aeruginosa (strain NIES-843 / IAM M-2473).